The chain runs to 471 residues: MPAASDKPVVTRFAPSPTGYLHIGGGRTALFNWLYARGRKGTFLLRIEDTDRERSTPEATDAILRGLTWLGLDWDGEVVSQFARKDRHAEVAREMLARGAAYKCFSTQEEIEAFREAARAEGRSTLFRSPWRDADPTSHPDAPFVIRMKAPRSGETVIEDEVQGTVRFQNETLDDMVVLRSDGTPTYMLAVVVDDHDMGVTHVIRGDDHLNNAARQTMVYEAMGWEVPVWAHIPLIHGPDGKKLSKRHGALGVEEYQAMGYPAAGMRNYLARLGWSHGDDEFFTSEQAMDWFDLGGIGRSPARLDFKKLESVCGQHIAVMEDAELMREIAAYLAAARKPALTDLQAERLEKGLYALKDRAKTFPELLEKARFALESRPIAADDAAAKALDPVSRGILRELTPMLQAASWSKQDLEAILTAFASEKGMGFGKLAAPLRTALAGRTVTPSVYDMMLVIGRDETIARLEDAAAA.

The 'HIGH' region motif lies at Pro15–Gly25. A 'KMSKS' region motif is present at residues Lys243 to Arg247. Lys246 serves as a coordination point for ATP.

The protein belongs to the class-I aminoacyl-tRNA synthetase family. Glutamate--tRNA ligase type 1 subfamily. Monomer.

It localises to the cytoplasm. The enzyme catalyses tRNA(Glu) + L-glutamate + ATP = L-glutamyl-tRNA(Glu) + AMP + diphosphate. Functionally, catalyzes the attachment of glutamate to tRNA(Glu) in a two-step reaction: glutamate is first activated by ATP to form Glu-AMP and then transferred to the acceptor end of tRNA(Glu). The sequence is that of Glutamate--tRNA ligase 1 from Cereibacter sphaeroides (strain ATCC 17029 / ATH 2.4.9) (Rhodobacter sphaeroides).